The following is a 309-amino-acid chain: E3 ubiquitin-protein ligase SINAT5 (309 aa).

The RING-type zinc finger occupies cysteine 46 to arginine 82. The segment at valine 96–arginine 289 is SBD. An SIAH-type zinc finger spans residues serine 99 to lysine 159. Zn(2+)-binding residues include cysteine 104, cysteine 111, histidine 123, cysteine 127, cysteine 134, cysteine 141, histidine 153, and histidine 158.

The protein belongs to the SINA (Seven in absentia) family. As to quaternary structure, homodimer; homodimerization is essential for its function. Interacts with UBC28 and NAC021/NAC022. Interacts with SINAT6. Interacts with ATG6 and TRAF1A. Interacts with WAV3. Interacts with FREE1. As to expression, expressed at low level in the vascular tissue of mature roots. Expressed in lateral roots and in elongation zone of the main root upon stimulation by auxin. Colocalizes with NAC021/NAC022.

It localises to the nucleus. The protein resides in the cytoplasm. The catalysed reaction is S-ubiquitinyl-[E2 ubiquitin-conjugating enzyme]-L-cysteine + [acceptor protein]-L-lysine = [E2 ubiquitin-conjugating enzyme]-L-cysteine + N(6)-ubiquitinyl-[acceptor protein]-L-lysine.. Its pathway is protein modification; protein ubiquitination. Its function is as follows. E3 ubiquitin-protein ligase that mediates ubiquitination and subsequent proteasomal degradation of target proteins. E3 ubiquitin ligases accept ubiquitin from an E2 ubiquitin-conjugating enzyme in the form of a thioester and then directly transfers the ubiquitin to targeted substrates. Mediates the ubiquitination and proteasomal-dependent degradation of NAC021/NAC022, a transcription activator that functions downstream of the auxin signals, thereby acting as a down-regulator of auxin signals. Involved in the formation of lateral roots. Is antagonist to SINAT1, SINAT2, SINAT3 and SINAT4 by suppressing FREE1 ubiquitination and degradation mediated by SINAT1, SINAT2, SINAT3 and SINAT4, and promoting FREE1 accumulation. The chain is E3 ubiquitin-protein ligase SINAT5 from Arabidopsis thaliana (Mouse-ear cress).